Consider the following 245-residue polypeptide: Uridylate kinase (245 aa).

An ATP-binding site is contributed by 18-21; sequence KLSG. A UMP-binding site is contributed by Gly60. Residues Gly61 and Arg65 each coordinate ATP. UMP-binding positions include Asp80 and 141–148; that span reads TGNPFFTT. ATP-binding residues include Thr168, Tyr174, and Asp177.

It belongs to the UMP kinase family. Homohexamer.

The protein resides in the cytoplasm. The catalysed reaction is UMP + ATP = UDP + ADP. It participates in pyrimidine metabolism; CTP biosynthesis via de novo pathway; UDP from UMP (UMPK route): step 1/1. With respect to regulation, inhibited by UTP. Its function is as follows. Catalyzes the reversible phosphorylation of UMP to UDP. The polypeptide is Uridylate kinase (Pseudomonas aeruginosa (strain UCBPP-PA14)).